The primary structure comprises 327 residues: Regulatory protein MsrR (327 aa).

Positions 1 to 18 (MDKETNDNEYRRQSEHRT) are enriched in basic and acidic residues. The disordered stretch occupies residues 1-24 (MDKETNDNEYRRQSEHRTSAPKRK). At 1–31 (MDKETNDNEYRRQSEHRTSAPKRKKKKKIRK) the chain is on the cytoplasmic side. The helical; Signal-anchor for type II membrane protein transmembrane segment at 32–52 (LPIILLIVVILLIALVVYIVH) threads the bilayer. The Extracellular portion of the chain corresponds to 53–327 (SYNSGVEYAK…QAIKDFLDED (275 aa)).

The protein belongs to the LytR/CpsA/Psr (LCP) family.

It is found in the cell membrane. Its function is as follows. Involved in SarA attenuation. Affects resistance to oxacillin and teicoplanin, as well as the synthesis of virulence factors. This chain is Regulatory protein MsrR (msrR), found in Staphylococcus aureus (strain Mu50 / ATCC 700699).